The chain runs to 150 residues: Large ribosomal subunit protein uL15 (150 aa).

The tract at residues 1–51 (MKLHTLRPAKGSVKTSKRIGRGTGSGRGGTSTKGHKGAKSRSGYSSKIGFE) is disordered. Positions 21 to 31 (RGTGSGRGGTS) are enriched in gly residues.

It belongs to the universal ribosomal protein uL15 family. As to quaternary structure, part of the 50S ribosomal subunit.

Binds to the 23S rRNA. The protein is Large ribosomal subunit protein uL15 of Cytophaga hutchinsonii (strain ATCC 33406 / DSM 1761 / CIP 103989 / NBRC 15051 / NCIMB 9469 / D465).